Consider the following 210-residue polypeptide: 7-carboxy-7-deazaguanine synthase (210 aa).

Residues 12-14 (LQG) and R27 each bind substrate. Residues 18–210 (QAGKAAVFCR…VQTHKYLGLP (193 aa)) enclose the Radical SAM core domain. 3 residues coordinate [4Fe-4S] cluster: C31, C46, and C49. T51 is a binding site for Mg(2+). Position 90 (T90) interacts with substrate. S-adenosyl-L-methionine-binding positions include G92, 133–135 (SPK), and 173–176 (QPMD). P210 lines the substrate pocket.

This sequence belongs to the radical SAM superfamily. 7-carboxy-7-deazaguanine synthase family. In terms of assembly, homodimer. It depends on [4Fe-4S] cluster as a cofactor. Requires S-adenosyl-L-methionine as cofactor. The cofactor is Mg(2+).

It catalyses the reaction 6-carboxy-5,6,7,8-tetrahydropterin + H(+) = 7-carboxy-7-deazaguanine + NH4(+). It participates in purine metabolism; 7-cyano-7-deazaguanine biosynthesis. Functionally, catalyzes the complex heterocyclic radical-mediated conversion of 6-carboxy-5,6,7,8-tetrahydropterin (CPH4) to 7-carboxy-7-deazaguanine (CDG), a step common to the biosynthetic pathways of all 7-deazapurine-containing compounds. The sequence is that of 7-carboxy-7-deazaguanine synthase from Caulobacter vibrioides (strain ATCC 19089 / CIP 103742 / CB 15) (Caulobacter crescentus).